The primary structure comprises 337 residues: 1-aminocyclopropane-1-carboxylate deaminase (337 aa).

N6-(pyridoxal phosphate)lysine is present on Lys50.

Belongs to the ACC deaminase/D-cysteine desulfhydrase family. As to quaternary structure, homotrimer. Pyridoxal 5'-phosphate is required as a cofactor.

It catalyses the reaction 1-aminocyclopropane-1-carboxylate + H2O = 2-oxobutanoate + NH4(+). In terms of biological role, catalyzes a cyclopropane ring-opening reaction, the irreversible conversion of 1-aminocyclopropane-1-carboxylate (ACC) to ammonia and alpha-ketobutyrate. Allows growth on ACC as a nitrogen source. The polypeptide is 1-aminocyclopropane-1-carboxylate deaminase (Mesorhizobium japonicum (strain LMG 29417 / CECT 9101 / MAFF 303099) (Mesorhizobium loti (strain MAFF 303099))).